The following is a 318-amino-acid chain: Transaldolase (318 aa).

The active-site Schiff-base intermediate with substrate is Lys131.

It belongs to the transaldolase family. Type 1 subfamily. Homodimer.

It is found in the cytoplasm. It carries out the reaction D-sedoheptulose 7-phosphate + D-glyceraldehyde 3-phosphate = D-erythrose 4-phosphate + beta-D-fructose 6-phosphate. The protein operates within carbohydrate degradation; pentose phosphate pathway; D-glyceraldehyde 3-phosphate and beta-D-fructose 6-phosphate from D-ribose 5-phosphate and D-xylulose 5-phosphate (non-oxidative stage): step 2/3. In terms of biological role, transaldolase is important for the balance of metabolites in the pentose-phosphate pathway. The protein is Transaldolase of Cellvibrio japonicus (strain Ueda107) (Pseudomonas fluorescens subsp. cellulosa).